The following is a 156-amino-acid chain: Small ribosomal subunit protein uS15 (156 aa).

Residues 1-67 form a disordered region; sequence MARMHTRRRG…GVQGTPIPDV (67 aa). Positions 10 to 19 are enriched in basic and acidic residues; the sequence is GSSDSDKPAA. The segment covering 21-32 has biased composition (acidic residues); that stretch reads EPPEWSDVDEDA.

The protein belongs to the universal ribosomal protein uS15 family. In terms of assembly, part of the 30S ribosomal subunit.

This Haloarcula marismortui (strain ATCC 43049 / DSM 3752 / JCM 8966 / VKM B-1809) (Halobacterium marismortui) protein is Small ribosomal subunit protein uS15.